We begin with the raw amino-acid sequence, 227 residues long: DNA repair protein RecO (227 aa).

This sequence belongs to the RecO family.

Its function is as follows. Involved in DNA repair and RecF pathway recombination. The sequence is that of DNA repair protein RecO from Pseudomonas savastanoi pv. phaseolicola (strain 1448A / Race 6) (Pseudomonas syringae pv. phaseolicola (strain 1448A / Race 6)).